The primary structure comprises 867 residues: Transcription factor E2F8 (867 aa).

Positions 38 to 58 (DFGPLTTPTKPKEGSQGEPWT) are disordered. 2 positions are modified to phosphoserine: Ser-71 and Ser-102. 2 DNA-binding regions span residues 113-182 (RKEK…TWHG) and 261-347 (RKDK…KWTG). Disordered stretches follow at residues 408 to 432 (RRKI…NSAP), 532 to 616 (QSVT…SGSK), and 771 to 800 (APEN…GQSV). Residues Ser-413 and Ser-417 each carry the phosphoserine modification. Polar residues-rich tracts occupy residues 413-432 (SAPS…NSAP) and 532-556 (QSVT…TGSK). A compositionally biased stretch (basic and acidic residues) spans 557-567 (DSTDATTEKAA). Over residues 568-579 (NDTSKASASTRP) the composition is skewed to polar residues. Over residues 594-604 (RTREPAGERGS) the composition is skewed to basic and acidic residues. Over residues 775–800 (AGTQQGRATNYDSPVPGQSQPNGQSV) the composition is skewed to polar residues.

The protein belongs to the E2F/DP family. Homodimer and heterodimer: mainly forms homodimers and, to a lesser extent, heterodimers with E2F8. Dimerization is important for DNA-binding. Interacts with HIF1A.

Its subcellular location is the nucleus. Functionally, atypical E2F transcription factor that participates in various processes such as angiogenesis and polyploidization of specialized cells. Mainly acts as a transcription repressor that binds DNA independently of DP proteins and specifically recognizes the E2 recognition site 5'-TTTC[CG]CGC-3'. Directly represses transcription of classical E2F transcription factors such as E2F1: component of a feedback loop in S phase by repressing the expression of E2F1, thereby preventing p53/TP53-dependent apoptosis. Plays a key role in polyploidization of cells in placenta and liver by regulating the endocycle, probably by repressing genes promoting cytokinesis and antagonizing action of classical E2F proteins (E2F1, E2F2 and/or E2F3). Required for placental development by promoting polyploidization of trophoblast giant cells. Acts as a promoter of sprouting angiogenesis, possibly by acting as a transcription activator: associates with HIF1A, recognizes and binds the VEGFA promoter, which is different from canonical E2 recognition site, and activates expression of the VEGFA gene. The chain is Transcription factor E2F8 (E2F8) from Homo sapiens (Human).